Here is a 169-residue protein sequence, read N- to C-terminus: Small ribosomal subunit protein uS5 (169 aa).

In terms of domain architecture, S5 DRBM spans leucine 14–valine 77.

Belongs to the universal ribosomal protein uS5 family. Part of the 30S ribosomal subunit. Contacts proteins S4 and S8.

Its function is as follows. With S4 and S12 plays an important role in translational accuracy. Functionally, located at the back of the 30S subunit body where it stabilizes the conformation of the head with respect to the body. The protein is Small ribosomal subunit protein uS5 of Clostridioides difficile (strain 630) (Peptoclostridium difficile).